A 415-amino-acid polypeptide reads, in one-letter code: Hepatocyte nuclear factor 3-beta (415 aa).

A DNA-binding region (fork-head) is located at residues 150-244; sequence KPPYSYISLI…ENGCYLRRQK (95 aa). The segment covering 251 to 262 has biased composition (basic and acidic residues); sequence KMSMKEPGRKGG. The tract at residues 251 to 324 is disordered; that stretch reads KMSMKEPGRK…GQHLMSQHHS (74 aa). The span at 266 to 277 shows a compositional bias: low complexity; sequence SANSSSDSCNGN. Polar residues predominate over residues 310–323; that stretch reads SPVSQGQHLMSQHH.

The protein localises to the nucleus. In terms of biological role, transcription activator for a number of liver genes. Interacts with the cis-acting regulatory regions of these genes. In Oryzias latipes (Japanese rice fish), this protein is Hepatocyte nuclear factor 3-beta (foxa2).